Consider the following 513-residue polypeptide: Bifunctional purine biosynthesis protein PurH (513 aa).

The region spanning 1–144 is the MGS-like domain; it reads MKRALISVSD…KNYQDVTVVT (144 aa).

This sequence belongs to the PurH family.

It carries out the reaction (6R)-10-formyltetrahydrofolate + 5-amino-1-(5-phospho-beta-D-ribosyl)imidazole-4-carboxamide = 5-formamido-1-(5-phospho-D-ribosyl)imidazole-4-carboxamide + (6S)-5,6,7,8-tetrahydrofolate. The enzyme catalyses IMP + H2O = 5-formamido-1-(5-phospho-D-ribosyl)imidazole-4-carboxamide. It participates in purine metabolism; IMP biosynthesis via de novo pathway; 5-formamido-1-(5-phospho-D-ribosyl)imidazole-4-carboxamide from 5-amino-1-(5-phospho-D-ribosyl)imidazole-4-carboxamide (10-formyl THF route): step 1/1. It functions in the pathway purine metabolism; IMP biosynthesis via de novo pathway; IMP from 5-formamido-1-(5-phospho-D-ribosyl)imidazole-4-carboxamide: step 1/1. This Lactobacillus acidophilus (strain ATCC 700396 / NCK56 / N2 / NCFM) protein is Bifunctional purine biosynthesis protein PurH.